A 365-amino-acid polypeptide reads, in one-letter code: Quinone oxidoreductase-like protein 2 homolog (365 aa).

It belongs to the zinc-containing alcohol dehydrogenase family. Quinone oxidoreductase subfamily.

In Nematostella vectensis (Starlet sea anemone), this protein is Quinone oxidoreductase-like protein 2 homolog.